We begin with the raw amino-acid sequence, 79 residues long: Methionine-rich peptide X (79 aa).

Positions 1–22 (MKKLAAVMLTSCLMVAVGASFA) are cleaved as a signal peptide. Positions 37–79 (KKDDMAKDEMKKDSMAKDGMKKDAMKKDAMMKKDGMTKDEMKK) are disordered.

Post-translationally, protein is oxidized (possibly on Met residues) when cells are exposed to chlorite or hypochlorite; initially the protein is highly oxidized, by 50 minutes all protein is in the reduced form.

The protein localises to the periplasm. Its function is as follows. Serves as an oxidative stress sink, specifically for chlorite and hypochlorite. In Azospira oryzae (strain ATCC BAA-33 / DSM 13638 / PS) (Dechlorosoma suillum), this protein is Methionine-rich peptide X.